We begin with the raw amino-acid sequence, 271 residues long: MNTPEDSTLGREVAYPSGYDPSLLFPIPRAAGRQAIGLTGDLPFIGRDRWHAYELSWLDAQGKPCVATATLHVPCDSPSLIESKSLKLYLNSLNATRFNSAEAVRTRIATDLSTRAGADVAVEFGLPPIDAVGEGESIDALDLSIDDYGPPNAAYLCAHAQPVVEEVLTSALLKSNCPVTGQPDWASVTLRYRGAPIDREGLLRYLVSFRDHAEFHEQCVERIFNDVLTQCAPQWLVVEARYTRRGGLDINPLRSSASVPTPLSIFRDLRQ.

81-83 (IES) contributes to the substrate binding site. 83–84 (SK) is a binding site for NADPH. The active-site Thioimide intermediate is Cys177. The Proton donor role is filled by Asp184. A substrate-binding site is contributed by 216–217 (HE). 245-246 (RG) is an NADPH binding site.

It belongs to the GTP cyclohydrolase I family. QueF type 2 subfamily. Homodimer.

It localises to the cytoplasm. It carries out the reaction 7-aminomethyl-7-carbaguanine + 2 NADP(+) = 7-cyano-7-deazaguanine + 2 NADPH + 3 H(+). The protein operates within tRNA modification; tRNA-queuosine biosynthesis. Its function is as follows. Catalyzes the NADPH-dependent reduction of 7-cyano-7-deazaguanine (preQ0) to 7-aminomethyl-7-deazaguanine (preQ1). The chain is NADPH-dependent 7-cyano-7-deazaguanine reductase from Xanthomonas axonopodis pv. citri (strain 306).